The following is a 248-amino-acid chain: Probable transcriptional regulatory protein PSPTO_3980 (248 aa).

It belongs to the TACO1 family.

Its subcellular location is the cytoplasm. This Pseudomonas syringae pv. tomato (strain ATCC BAA-871 / DC3000) protein is Probable transcriptional regulatory protein PSPTO_3980.